The chain runs to 254 residues: 3-dehydroquinate dehydratase (254 aa).

3-dehydroquinate-binding positions include 47-49 (EWR) and R83. The active-site Proton donor/acceptor is the H144. K171 (schiff-base intermediate with substrate) is an active-site residue. Residues R214, S233, and Q237 each contribute to the 3-dehydroquinate site.

Belongs to the type-I 3-dehydroquinase family. Homodimer.

The enzyme catalyses 3-dehydroquinate = 3-dehydroshikimate + H2O. Its pathway is metabolic intermediate biosynthesis; chorismate biosynthesis; chorismate from D-erythrose 4-phosphate and phosphoenolpyruvate: step 3/7. Its function is as follows. Involved in the third step of the chorismate pathway, which leads to the biosynthesis of aromatic amino acids. Catalyzes the cis-dehydration of 3-dehydroquinate (DHQ) and introduces the first double bond of the aromatic ring to yield 3-dehydroshikimate. This is 3-dehydroquinate dehydratase from Bacillus licheniformis (strain ATCC 14580 / DSM 13 / JCM 2505 / CCUG 7422 / NBRC 12200 / NCIMB 9375 / NCTC 10341 / NRRL NRS-1264 / Gibson 46).